Consider the following 64-residue polypeptide: Large ribosomal subunit protein bL32 (64 aa).

The protein belongs to the bacterial ribosomal protein bL32 family.

This chain is Large ribosomal subunit protein bL32, found in Flavobacterium psychrophilum (strain ATCC 49511 / DSM 21280 / CIP 103535 / JIP02/86).